The sequence spans 114 residues: MQPGGAPDMSALLAQAQQMQQQLMAAQAQIAAAEVTGESGGGLVRITGKGSGEVTSVQIDPKIVDPEDVETLQDLIIGALADLTSKTQELASQRLGPLAGGLGDLGGGLGLPGV.

The protein belongs to the YbaB/EbfC family. As to quaternary structure, homodimer.

The protein resides in the cytoplasm. It is found in the nucleoid. In terms of biological role, binds to DNA and alters its conformation. May be involved in regulation of gene expression, nucleoid organization and DNA protection. The protein is Nucleoid-associated protein MAB_0319 of Mycobacteroides abscessus (strain ATCC 19977 / DSM 44196 / CCUG 20993 / CIP 104536 / JCM 13569 / NCTC 13031 / TMC 1543 / L948) (Mycobacterium abscessus).